Consider the following 111-residue polypeptide: Beta-2-microglobulin (111 aa).

An N-terminal signal peptide occupies residues 1-17 (MRALILLSLGLLRVAVP). The Ig-like C1-type domain maps to 20 to 111 (PQVVVYTYKP…KTSIYKLESF (92 aa)).

It belongs to the beta-2-microglobulin family. In terms of assembly, heterodimer of an alpha chain and a beta chain. Beta-2-microglobulin is the beta-chain of major histocompatibility complex class I molecules.

Its subcellular location is the secreted. Its function is as follows. Component of the class I major histocompatibility complex (MHC). Involved in the presentation of peptide antigens to the immune system. In Rostroraja eglanteria (Clearnose skate), this protein is Beta-2-microglobulin (b2m).